We begin with the raw amino-acid sequence, 154 residues long: 6,7-dimethyl-8-ribityllumazine synthase (154 aa).

5-amino-6-(D-ribitylamino)uracil contacts are provided by residues F22, 57-59, and 81-83; these read VCE and TVI. Position 86 to 87 (86 to 87) interacts with (2S)-2-hydroxy-3-oxobutyl phosphate; sequence KT. The active-site Proton donor is the H89. V114 provides a ligand contact to 5-amino-6-(D-ribitylamino)uracil. R128 contributes to the (2S)-2-hydroxy-3-oxobutyl phosphate binding site.

This sequence belongs to the DMRL synthase family. As to quaternary structure, forms an icosahedral capsid composed of 60 subunits, arranged as a dodecamer of pentamers.

The catalysed reaction is (2S)-2-hydroxy-3-oxobutyl phosphate + 5-amino-6-(D-ribitylamino)uracil = 6,7-dimethyl-8-(1-D-ribityl)lumazine + phosphate + 2 H2O + H(+). Its pathway is cofactor biosynthesis; riboflavin biosynthesis; riboflavin from 2-hydroxy-3-oxobutyl phosphate and 5-amino-6-(D-ribitylamino)uracil: step 1/2. Functionally, catalyzes the formation of 6,7-dimethyl-8-ribityllumazine by condensation of 5-amino-6-(D-ribitylamino)uracil with 3,4-dihydroxy-2-butanone 4-phosphate. This is the penultimate step in the biosynthesis of riboflavin. The chain is 6,7-dimethyl-8-ribityllumazine synthase from Wigglesworthia glossinidia brevipalpis.